A 180-amino-acid polypeptide reads, in one-letter code: Negative modulator of initiation of replication (180 aa).

The tract at residues 115–119 (RTRVY) is interaction with DNA.

The protein belongs to the SeqA family. Homodimer. Polymerizes to form helical filaments.

The protein resides in the cytoplasm. In terms of biological role, negative regulator of replication initiation, which contributes to regulation of DNA replication and ensures that replication initiation occurs exactly once per chromosome per cell cycle. Binds to pairs of hemimethylated GATC sequences in the oriC region, thus preventing assembly of replication proteins and re-initiation at newly replicated origins. Repression is relieved when the region becomes fully methylated. The protein is Negative modulator of initiation of replication of Aliivibrio fischeri (strain ATCC 700601 / ES114) (Vibrio fischeri).